We begin with the raw amino-acid sequence, 89 residues long: uncharacterized protein (89 aa).

This is an uncharacterized protein from Escherichia coli (strain K12).